The sequence spans 501 residues: Flagellin (501 aa).

Belongs to the bacterial flagellin family.

The protein localises to the secreted. It localises to the bacterial flagellum. In terms of biological role, flagellin is the subunit protein which polymerizes to form the filaments of bacterial flagella. The protein is Flagellin (flaA) of Aquifex pyrophilus.